We begin with the raw amino-acid sequence, 420 residues long: Dynein axonemal assembly factor 4 (420 aa).

Residues 3–87 enclose the CS domain; sequence VRVSEFSWQQ…KEPVLWESLS (85 aa). Residues 7-103 form a mediates interaction with ESR1 and STUB1 region; sequence EFSWQQTPAA…EMMQRIREKS (97 aa). The segment covering 165–192 has biased composition (basic and acidic residues); it reads CQKKADGQKRVQRKEKPLQGKQAEERGA. The tract at residues 165-212 is disordered; sequence CQKKADGQKRVQRKEKPLQGKQAEERGALKPQSLPRKAPPTRLPTRGR. TPR repeat units lie at residues 288-321, 323-355, and 364-397; these read PDWL…NRKI, VLYL…LTPP, and MKAH…DPAN.

In terms of assembly, interacts with ZMYND10. Interacts with STUB1. Interacts with ESR1 and ESR2. Interacts with DNAAF2. Interacts with CCT3, CCT4, CCT5 and CCT8. Interacts with DNAAF6/PIH1D3.

It localises to the nucleus. The protein resides in the cytoplasm. The protein localises to the cell projection. Its subcellular location is the neuron projection. It is found in the dynein axonemal particle. Involved in neuronal migration during development of the cerebral neocortex. May regulate the stability and proteasomal degradation of the estrogen receptors that play an important role in neuronal differentiation, survival and plasticity. Axonemal dynein assembly factor required for ciliary motility. This chain is Dynein axonemal assembly factor 4, found in Rattus norvegicus (Rat).